Consider the following 93-residue polypeptide: uncharacterized protein (93 aa).

A signal peptide spans 1 to 22; it reads MNKYWLSGIIFLAYGLASPAFS.

This is an uncharacterized protein from Escherichia coli (strain K12).